The chain runs to 349 residues: MHPEKIALTQTVQKGGCAAKVAATTLHRILQQVRFPAAHSALMVDGRYFDDAAIYKINEQTALVQTLDFFTPIVDTPRLFGEIAAANAISDVYAMGGRPVTAMGILAFPLATLSEHIIVDVLQGASDKIAEAGANFVGGHSIDDDTLKFGLSVTGLVNPQQVWTNANAQSGDHLVLTKALGTGTLTAGIKRQQLQEKDIMDALESMAAINNVIDYLSPDLLAAIHAATDITGFGFSGHAMQLANASNVTLSIATGNLPRFDKAFYCLKNSFLTKAHRTNAEYTTPHIDDAKLDALYKLLIHDPQTSGGLLLSVVPEASQLVLQALRTYFKPAAIVGTVHPRQDKAVQFE.

C17 is an active-site residue. ATP is bound by residues K20 and 48–50 (YFD). D51 serves as a coordination point for Mg(2+). Residues D68, D91, and 139-141 (GHS) each bind ATP. D91 is a binding site for Mg(2+). D229 contributes to the Mg(2+) binding site.

Belongs to the selenophosphate synthase 1 family. Class I subfamily. Homodimer. Mg(2+) is required as a cofactor.

The catalysed reaction is hydrogenselenide + ATP + H2O = selenophosphate + AMP + phosphate + 2 H(+). In terms of biological role, synthesizes selenophosphate from selenide and ATP. The chain is Selenide, water dikinase from Nitrosomonas eutropha (strain DSM 101675 / C91 / Nm57).